A 2128-amino-acid polypeptide reads, in one-letter code: Spectrin beta chain, erythrocytic (2128 aa).

Residues 1 to 15 (MTSATEFENVGNQPP) show a composition bias toward polar residues. Residues 1-30 (MTSATEFENVGNQPPFSRINARWDAPDDEL) form a disordered region. The segment at 2–275 (TSATEFENVG…IITYVVAFYH (274 aa)) is actin-binding. S36 bears the Phosphoserine mark. Calponin-homology (CH) domains lie at 54 to 158 (VVQK…LRFQ) and 173 to 278 (RSAK…HYFS). T104 carries the post-translational modification Phosphothreonine. Spectrin repeat units follow at residues 303–411 (MIEK…LALR), 416–517 (RQEF…QRLE), 521–627 (ALQK…QLEQ), 630–733 (RLWK…DLQD), 736–838 (NFFQ…KLQE), 845–942 (VFGE…REAV), 950–1050 (NYCV…LSLG), 1054–1157 (KLQA…NTLT), 1162–1250 (FQEF…RHKK), 1267–1368 (ELQN…EQLS), 1381–1455 (ADLN…FLDL), 1473–1574 (LQIS…RLRD), 1576–1680 (HEAQ…RLEN), 1682–1784 (YHLF…MQLL), 1789–1890 (DLHR…RAQL), 1897–1997 (FRFF…DRLH), and 2004–2064 (QFSR…KPTT). Residue S1289 is modified to Phosphoserine. A Phosphoserine modification is found at S2034. Residues 2062–2108 (PTTLELKERQTPERPTEEPGPQEEEGETAGEAPQVHHAATERTSPVS) are disordered. T2064, T2072, and T2101 each carry phosphothreonine. Basic and acidic residues predominate over residues 2066–2078 (ELKERQTPERPTE). 5 positions are modified to phosphoserine: S2105, S2108, S2114, S2116, and S2119.

Belongs to the spectrin family. In terms of assembly, composed of nonhomologous chains, alpha and beta, which aggregate to form dimers, tetramers, and higher polymers. Interacts with BCAM.

The protein resides in the cytoplasm. Its subcellular location is the cytoskeleton. It is found in the cell cortex. In terms of biological role, spectrin is the major constituent of the cytoskeletal network underlying the erythrocyte plasma membrane. It associates with band 4.1 and actin to form the cytoskeletal superstructure of the erythrocyte plasma membrane. The sequence is that of Spectrin beta chain, erythrocytic (Sptb) from Mus musculus (Mouse).